Reading from the N-terminus, the 165-residue chain is Neurotrophin-3 (165 aa).

An N-terminal signal peptide occupies residues 1–3 (IQS). Residues 4 to 119 (TSMDQGSLTE…VLNRTSRRKR (116 aa)) constitute a propeptide that is removed on maturation. Asparagine 112 carries N-linked (GlcNAc...) asparagine glycosylation.

It belongs to the NGF-beta family.

The protein resides in the secreted. In terms of biological role, seems to promote the survival of visceral and proprioceptive sensory neurons. The polypeptide is Neurotrophin-3 (NTF3) (Calabaria reinhardtii (Calabar boa)).